We begin with the raw amino-acid sequence, 103 residues long: Small ribosomal subunit protein uS10 (103 aa).

The protein belongs to the universal ribosomal protein uS10 family. In terms of assembly, part of the 30S ribosomal subunit.

Functionally, involved in the binding of tRNA to the ribosomes. In Ralstonia pickettii (strain 12J), this protein is Small ribosomal subunit protein uS10.